The following is a 417-amino-acid chain: Serine hydroxymethyltransferase (417 aa).

An N6-acetyllysine modification is found at lysine 54. (6S)-5,6,7,8-tetrahydrofolate is bound by residues leucine 121 and 125–127 (GHL). Position 229 is an N6-(pyridoxal phosphate)lysine (lysine 229). An N6-acetyllysine mark is found at lysine 250, lysine 285, and lysine 354. 355–357 (SPF) provides a ligand contact to (6S)-5,6,7,8-tetrahydrofolate. Lysine 375 is subject to N6-acetyllysine.

The protein belongs to the SHMT family. As to quaternary structure, homodimer. It depends on pyridoxal 5'-phosphate as a cofactor.

It is found in the cytoplasm. It catalyses the reaction (6R)-5,10-methylene-5,6,7,8-tetrahydrofolate + glycine + H2O = (6S)-5,6,7,8-tetrahydrofolate + L-serine. The protein operates within one-carbon metabolism; tetrahydrofolate interconversion. It functions in the pathway amino-acid biosynthesis; glycine biosynthesis; glycine from L-serine: step 1/1. Catalyzes the reversible interconversion of serine and glycine with tetrahydrofolate (THF) serving as the one-carbon carrier. This reaction serves as the major source of one-carbon groups required for the biosynthesis of purines, thymidylate, methionine, and other important biomolecules. Also exhibits THF-independent aldolase activity toward beta-hydroxyamino acids, producing glycine and aldehydes, via a retro-aldol mechanism. In Escherichia coli O17:K52:H18 (strain UMN026 / ExPEC), this protein is Serine hydroxymethyltransferase.